A 220-amino-acid chain; its full sequence is LHFPL tetraspan subfamily member 1 protein (220 aa).

Residues Met-1–Ala-20 form the signal peptide. 2 helical membrane passes run Val-86–Cys-106 and Ala-122–Trp-142. Asn-153 carries N-linked (GlcNAc...) asparagine glycosylation. Residues Leu-165 to Trp-185 traverse the membrane as a helical segment.

Belongs to the LHFP family. As to expression, widely expressed. Expressed at high levels in lung, thymus, skeletal muscle, colon and ovary.

It is found in the membrane. The polypeptide is LHFPL tetraspan subfamily member 1 protein (Homo sapiens (Human)).